The sequence spans 131 residues: Ribosome-binding factor A (131 aa).

Belongs to the RbfA family. Monomer. Binds 30S ribosomal subunits, but not 50S ribosomal subunits or 70S ribosomes.

It is found in the cytoplasm. Its function is as follows. One of several proteins that assist in the late maturation steps of the functional core of the 30S ribosomal subunit. Associates with free 30S ribosomal subunits (but not with 30S subunits that are part of 70S ribosomes or polysomes). Required for efficient processing of 16S rRNA. May interact with the 5'-terminal helix region of 16S rRNA. The sequence is that of Ribosome-binding factor A from Ruegeria pomeroyi (strain ATCC 700808 / DSM 15171 / DSS-3) (Silicibacter pomeroyi).